The chain runs to 135 residues: MPKRRRIALIAHDHKKDDMIAFAQTHKAFLMRCDLLATGTTGGRLQDEVGLSVQRMLSGPWGGDLQIGAQLAEGRVDAVIFLRDPMTPQPHEPDINALVRACDVHNIPCATNLATADLVMIALGLAQPDPKEIHA.

Residues 1–135 (MPKRRRIALI…AQPDPKEIHA (135 aa)) form the MGS-like domain. Substrate contacts are provided by residues His-12, Lys-16, 38–41 (TGTT), and 58–59 (SG). Asp-64 acts as the Proton donor/acceptor in catalysis. His-91 provides a ligand contact to substrate.

This sequence belongs to the methylglyoxal synthase family.

The catalysed reaction is dihydroxyacetone phosphate = methylglyoxal + phosphate. In terms of biological role, catalyzes the formation of methylglyoxal from dihydroxyacetone phosphate. This Ralstonia nicotianae (strain ATCC BAA-1114 / GMI1000) (Ralstonia solanacearum) protein is Methylglyoxal synthase.